We begin with the raw amino-acid sequence, 307 residues long: Elongation factor Ts (307 aa).

The involved in Mg(2+) ion dislocation from EF-Tu stretch occupies residues 79 to 82; that stretch reads TDFV.

This sequence belongs to the EF-Ts family.

The protein resides in the cytoplasm. In terms of biological role, associates with the EF-Tu.GDP complex and induces the exchange of GDP to GTP. It remains bound to the aminoacyl-tRNA.EF-Tu.GTP complex up to the GTP hydrolysis stage on the ribosome. The polypeptide is Elongation factor Ts (Bartonella henselae (strain ATCC 49882 / DSM 28221 / CCUG 30454 / Houston 1) (Rochalimaea henselae)).